The following is a 179-amino-acid chain: MREKIRSTTVICVRRDNKVVMAGDGQVTLGGEVLKSSARKLRRLYNDKILAGFAGSTADAFALFSRFESKLEQFNGNLSRSVVELAKEWRTDRVLRHLEALLLVSDTKSTYLVSGNGDVIEPDEGIVAIGSGGPFATAAATALLRNTKLSARRIVEESMKIAGEICIYTNQNVTFEELE.

Residue Thr-8 is part of the active site. The Na(+) site is built by Gly-163, Cys-166, and Thr-169.

The protein belongs to the peptidase T1B family. HslV subfamily. A double ring-shaped homohexamer of HslV is capped on each side by a ring-shaped HslU homohexamer. The assembly of the HslU/HslV complex is dependent on binding of ATP.

Its subcellular location is the cytoplasm. It catalyses the reaction ATP-dependent cleavage of peptide bonds with broad specificity.. Allosterically activated by HslU binding. Functionally, protease subunit of a proteasome-like degradation complex believed to be a general protein degrading machinery. The polypeptide is ATP-dependent protease subunit HslV (Solibacter usitatus (strain Ellin6076)).